We begin with the raw amino-acid sequence, 319 residues long: Urease accessory protein UreD (319 aa).

The interval 254–273 is disordered; the sequence is PDPVGSPAARRESVPAKRAE. Residues 262–273 show a composition bias toward basic and acidic residues; that stretch reads ARRESVPAKRAE.

Belongs to the UreD family. UreD, UreF and UreG form a complex that acts as a GTP-hydrolysis-dependent molecular chaperone, activating the urease apoprotein by helping to assemble the nickel containing metallocenter of UreC. The UreE protein probably delivers the nickel.

Its subcellular location is the cytoplasm. In terms of biological role, required for maturation of urease via the functional incorporation of the urease nickel metallocenter. In Frankia casuarinae (strain DSM 45818 / CECT 9043 / HFP020203 / CcI3), this protein is Urease accessory protein UreD.